Reading from the N-terminus, the 256-residue chain is uncharacterized protein (256 aa).

The signal sequence occupies residues 1 to 24 (MIKRVNKLVIGISLLFLVISITAG). C25 carries the N-palmitoyl cysteine lipid modification. C25 carries the S-diacylglycerol cysteine lipid modification.

This sequence belongs to the staphylococcal tandem lipoprotein family.

It localises to the cell membrane. This is an uncharacterized protein from Staphylococcus aureus (strain bovine RF122 / ET3-1).